The sequence spans 507 residues: Solute carrier family 2, facilitated glucose transporter member 6 (507 aa).

The segment at 1–28 is disordered; it reads MQEPLLGAEGPDYDTFPEKPPPSPGDRA. Residues 1-37 are Cytoplasmic-facing; it reads MQEPLLGAEGPDYDTFPEKPPPSPGDRARVGTLQNKR. A Dileucine internalization motif motif is present at residues 5-6; it reads LL. A Phosphoserine modification is found at Ser-23. A helical transmembrane segment spans residues 38–58; sequence VFLATFAAVLGNFSFGYALVY. Residues 59–81 lie on the Extracellular side of the membrane; the sequence is TSPVIPALERSLDPDLHLTKSQA. Residues 82-102 form a helical membrane-spanning segment; that stretch reads SWFGSVFTLGAAAGGLSAMIL. At 103-111 the chain is on the cytoplasmic side; it reads NDLLGRKLS. Residues 112 to 132 form a helical membrane-spanning segment; it reads IMFSAVPSAAGYALMAGAHGL. At 133 to 140 the chain is on the extracellular side; the sequence is WMLLLGRT. Residues 141 to 161 traverse the membrane as a helical segment; the sequence is LTGFAGGLTAACIPVYVSEIA. Residues 162 to 168 are Cytoplasmic-facing; the sequence is PPGVRGA. A helical transmembrane segment spans residues 169–189; it reads LGATPQLMAVFGSLSLYALGL. Residue Gln-174 participates in a D-hexose binding. The Extracellular portion of the chain corresponds to 190–194; sequence LLPWR. The chain crosses the membrane as a helical span at residues 195–215; that stretch reads WLAVAGEAPVLIMILLLSFMP. At 216 to 289 the chain is on the cytoplasmic side; sequence NSPRFLLSRG…LLMRLLQQLT (74 aa). 286–287 lines the a D-hexose pocket; it reads QQ. A helical transmembrane segment spans residues 290-310; the sequence is GITPILVYLQSIFDSTAVLLP. Residues 311–314 are Extracellular-facing; the sequence is PKDD. A helical transmembrane segment spans residues 315–335; the sequence is AAIVGAVRLLSVLIAALTMDL. The Cytoplasmic segment spans residues 336 to 339; the sequence is AGRK. A helical transmembrane segment spans residues 340–360; it reads VLLFVSAAIMFAANLTLGLYI. Over 361 to 395 the chain is Extracellular; sequence HFGPRPLSPNSTAGLESESWGDLAQPLAAPAGYLT. N-linked (GlcNAc...) asparagine glycosylation occurs at Asn-370. The chain crosses the membrane as a helical span at residues 396-416; that stretch reads LVPLLATMLFIMGYAVGWGPI. Over 417–435 the chain is Cytoplasmic; it reads TWLLMSEVLPLRARGVASG. Residue Trp-418 coordinates a D-hexose. The helical transmembrane segment at 436 to 456 threads the bilayer; that stretch reads LCVLASWLTAFVLTKSFLPVV. Topologically, residues 457 to 462 are extracellular; it reads STFGLQ. Residues 463–483 traverse the membrane as a helical segment; that stretch reads VPFFFFAAICLVSLVFTGCCV. Over 484 to 507 the chain is Cytoplasmic; the sequence is PETKGRSLEQIESFFRTGRRSFLR.

This sequence belongs to the major facilitator superfamily. Sugar transporter (TC 2.A.1.1) family. Glucose transporter subfamily. Highly expressed in brain, spleen and peripheral blood leukocytes.

It is found in the lysosome membrane. Its function is as follows. Probable sugar transporter that acts as a regulator of glycolysis in macrophages. Does not transport glucose. In Homo sapiens (Human), this protein is Solute carrier family 2, facilitated glucose transporter member 6.